A 426-amino-acid chain; its full sequence is Protein prenyltransferase alpha subunit repeat-containing protein 1 (426 aa).

PFTA repeat units lie at residues 86–119, 121–154, 180–213, and 219–252; these read ALVD…VLNP, KDLY…QKEC, EEMR…AKGN, and DELS…AKEL. A disordered region spans residues 255 to 279; sequence AAEKDVHTSQQPNGENTATASDDNH. Polar residues predominate over residues 262 to 275; the sequence is TSQQPNGENTATAS. The PFTA 5 repeat unit spans residues 290–323; the sequence is EEIQLCTDLIESYPGHETLWCHRRHVFYLWHQWR.

This sequence belongs to the protein prenyltransferase subunit alpha family.

The protein is Protein prenyltransferase alpha subunit repeat-containing protein 1 (ptar1) of Danio rerio (Zebrafish).